Here is a 105-residue protein sequence, read N- to C-terminus: Small ribosomal subunit protein uS10 (105 aa).

The protein belongs to the universal ribosomal protein uS10 family. In terms of assembly, part of the 30S ribosomal subunit.

In terms of biological role, involved in the binding of tRNA to the ribosomes. This Rickettsia massiliae (strain Mtu5) protein is Small ribosomal subunit protein uS10.